Reading from the N-terminus, the 142-residue chain is MAP3K7 C-terminal-like protein (142 aa).

As to expression, detected in lung and peripheral blood leukocytes. Expressed predominantly in peripheral blood leukocytes and ubiquitously in adult and fetal tissues. Also expressed strongly in breast carcinoma GI-101, colon adenocarcinoma GI-112, and prostatic adenocarcinoma PC3.

The sequence is that of MAP3K7 C-terminal-like protein (MAP3K7CL) from Homo sapiens (Human).